The primary structure comprises 369 residues: Olfactory receptor 2T1 (369 aa).

The Extracellular portion of the chain corresponds to 1–76; that stretch reads MWQEYYFLNV…LFNRKETSGL (76 aa). N-linked (GlcNAc...) asparagine glycosylation occurs at Asn56. The chain crosses the membrane as a helical span at residues 77-97; that stretch reads IFAIISIIFFTALMANGVMIF. Over 98–107 the chain is Cytoplasmic; sequence LIQTDLRLHT. Residues 108-128 traverse the membrane as a helical segment; the sequence is PMYFLLSHLSLIDMMYISTIV. At 129–148 the chain is on the extracellular side; sequence PKMLVNYLLDQRTISFVGCT. Cys147 and Cys239 are disulfide-bonded. Residues 149-169 traverse the membrane as a helical segment; the sequence is AQHFLYLTLVGAEFFLLGLMA. Residues 170–191 lie on the Cytoplasmic side of the membrane; it reads YDRYVAICNPLRYPVLMSRRVC. A helical transmembrane segment spans residues 192 to 212; that stretch reads WMIIAGSWFGGSLDGFLLTPI. Residues 213–247 are Extracellular-facing; it reads TMSFPFCNSREINHFFCEAPAVLKLACADTALYET. The helical transmembrane segment at 248-268 threads the bilayer; sequence VMYVCCVLMLLIPFSVVLASY. At 269–286 the chain is on the cytoplasmic side; the sequence is ARILTTVQCMSSVEGRKK. Residues 287–307 form a helical membrane-spanning segment; that stretch reads AFATCSSHMTVVSLFYGAAMY. Topologically, residues 308 to 321 are extracellular; it reads TYMLPHSYHKPAQD. The helical transmembrane segment at 322–342 threads the bilayer; sequence KVLSVFYTILTPMLNPLIYSL. Residues 343-369 lie on the Cytoplasmic side of the membrane; that stretch reads RNKDVTGALKRALGRFKGPQRVSGGVF.

It belongs to the G-protein coupled receptor 1 family.

It is found in the cell membrane. Its function is as follows. Odorant receptor. This is Olfactory receptor 2T1 (OR2T1) from Homo sapiens (Human).